Reading from the N-terminus, the 264-residue chain is Glutamate racemase (264 aa).

Substrate contacts are provided by residues 10–11 (DS) and 42–43 (YG). Cys-73 serves as the catalytic Proton donor/acceptor. Residue 74–75 (NT) participates in substrate binding. Cys-183 serves as the catalytic Proton donor/acceptor. 184–185 (TH) is a binding site for substrate.

Belongs to the aspartate/glutamate racemases family.

It catalyses the reaction L-glutamate = D-glutamate. It participates in cell wall biogenesis; peptidoglycan biosynthesis. In terms of biological role, provides the (R)-glutamate required for cell wall biosynthesis. In Streptococcus uberis (strain ATCC BAA-854 / 0140J), this protein is Glutamate racemase.